Consider the following 270-residue polypeptide: Formamidopyrimidine-DNA glycosylase (270 aa).

Pro2 (schiff-base intermediate with DNA) is an active-site residue. Glu3 (proton donor) is an active-site residue. The active-site Proton donor; for beta-elimination activity is Lys56. Positions 89, 107, and 151 each coordinate DNA. The segment at 236–270 (TVYGRAGEPCRVCATPIRLLRQGQRSTYYCPNCQK) adopts an FPG-type zinc-finger fold. Arg260 acts as the Proton donor; for delta-elimination activity in catalysis.

It belongs to the FPG family. In terms of assembly, monomer. The cofactor is Zn(2+).

The catalysed reaction is Hydrolysis of DNA containing ring-opened 7-methylguanine residues, releasing 2,6-diamino-4-hydroxy-5-(N-methyl)formamidopyrimidine.. It carries out the reaction 2'-deoxyribonucleotide-(2'-deoxyribose 5'-phosphate)-2'-deoxyribonucleotide-DNA = a 3'-end 2'-deoxyribonucleotide-(2,3-dehydro-2,3-deoxyribose 5'-phosphate)-DNA + a 5'-end 5'-phospho-2'-deoxyribonucleoside-DNA + H(+). Its function is as follows. Involved in base excision repair of DNA damaged by oxidation or by mutagenic agents. Acts as a DNA glycosylase that recognizes and removes damaged bases. Has a preference for oxidized purines, such as 7,8-dihydro-8-oxoguanine (8-oxoG). Has AP (apurinic/apyrimidinic) lyase activity and introduces nicks in the DNA strand. Cleaves the DNA backbone by beta-delta elimination to generate a single-strand break at the site of the removed base with both 3'- and 5'-phosphates. The protein is Formamidopyrimidine-DNA glycosylase of Variovorax paradoxus (strain S110).